Consider the following 894-residue polypeptide: E3 ubiquitin-protein ligase SH3RF1 (894 aa).

The segment at 12–53 (CPVCLERLDASAKVLPCQHTFCKRCLLGIVGSRNELRCPECR) adopts an RING-type zinc-finger fold. SH3 domains lie at 134 to 193 (PQLP…IIKP) and 196 to 259 (QPPP…FNSA). The segment at 274 to 323 (VDTAECPSATAAQSSSASKHSDTKKNTRKRHSFTSLTMANKSSQASQNRH) is disordered. A compositionally biased stretch (low complexity) spans 281-291 (SATAAQSSSAS). Residues 293 to 363 (HSDTKKNTRK…APSQVHISTT (71 aa)) are interaction with RAC1. Serine 305 carries the phosphoserine modification. Residues 306-322 (FTSLTMANKSSQASQNR) show a composition bias toward polar residues. The interval 448-551 (HLRPQTRPSV…STAGGPAQKP (104 aa)) is interaction with AKT2. Residues 453–514 (TRPSVYVAIY…PGNYVAPVTR (62 aa)) enclose the SH3 3 domain. Disordered stretches follow at residues 526–556 (MSTA…GNGV) and 682–751 (LETE…PTLD). Serine 540 bears the Phosphoserine mark. Over residues 700–713 (SPESAASACGNSSA) the composition is skewed to polar residues. Over residues 715-726 (KPDKDSKKEKKG) the composition is skewed to basic and acidic residues. Serine 743 is modified (phosphoserine). The SH3 4 domain occupies 835–894 (VVCERHRVVVSYPPQSEAELELKEGDIVFVHKKREDGWFKGTLQRNGKTGLFPGSFVENI).

It belongs to the SH3RF family. In terms of assembly, interacts with HERP1. Interacts with RAC1; in a GTP-dependent manner. Interacts with MAP3K10/MLK2 and MAP3K11/MLK3. Interacts with MAPK8IP; this interaction leads to the PJAC complex (POSH-JIP or SH3RF1/MAPK8IP apoptotic complex) with a 1:1 ratio. Interacts with SIAH1. Probably part of a signaling complex that may contain SH3RF1, MAPK8IP, DLK1, MAP2K4/MKK4, MAP2K7/MKK7, MAPK8/JNK1, MAPK9/JNK2, AKT1 and AKT2. Found in a complex with RAC2, MAP3K7/TAK1, MAP2K7/MKK7, MAPK8IP1/JIP1, MAPK8/JNK1 and MAPK9/JNK2. Found in a complex with RAC1, MAP3K11/MLK3, MAP2K7/MKK7, MAPK8IP1/JIP1 and MAPK8/JNK1. Interacts with SH3RF2. Post-translationally, phosphorylated at Ser-305 by AKT1 and AKT2. When phosphorylated, it has reduced ability to bind Rac. In terms of processing, autoubiquitinated. Ubiquitinated by SH3RF2, leading to proteasome-mediated degradation.

Its subcellular location is the cytoplasm. It is found in the perinuclear region. The protein localises to the cell projection. The protein resides in the lamellipodium. It localises to the golgi apparatus. Its subcellular location is the trans-Golgi network. The catalysed reaction is S-ubiquitinyl-[E2 ubiquitin-conjugating enzyme]-L-cysteine + [acceptor protein]-L-lysine = [E2 ubiquitin-conjugating enzyme]-L-cysteine + N(6)-ubiquitinyl-[acceptor protein]-L-lysine.. Its pathway is protein modification; protein ubiquitination. Its function is as follows. Has E3 ubiquitin-protein ligase activity. In the absence of an external substrate, it can catalyze self-ubiquitination. Stimulates ubiquitination of potassium channel KCNJ1, enhancing it's dynamin-dependent and clathrin-independent endocytosis. Acts as a scaffold protein that coordinates with MAPK8IP1/JIP1 in organizing different components of the JNK pathway, including RAC1 or RAC2, MAP3K11/MLK3 or MAP3K7/TAK1, MAP2K7/MKK7, MAPK8/JNK1 and/or MAPK9/JNK2 into a functional multiprotein complex to ensure the effective activation of the JNK signaling pathway. Regulates the differentiation of CD4(+) and CD8(+) T-cells and promotes T-helper 1 (Th1) cell differentiation. Regulates the activation of MAPK8/JNK1 and MAPK9/JNK2 in CD4(+) T-cells and the activation of MAPK8/JNK1 in CD8(+) T-cells. Plays a crucial role in the migration of neocortical neurons in the developing brain. Controls proper cortical neuronal migration and the formation of proximal cytoplasmic dilation in the leading process (PCDLP) in migratory neocortical neurons by regulating the proper localization of activated RAC1 and F-actin assembly. This chain is E3 ubiquitin-protein ligase SH3RF1 (Sh3rf1), found in Rattus norvegicus (Rat).